Reading from the N-terminus, the 176-residue chain is Interleukin-7 (176 aa).

The first 25 residues, 1–25 (MFHVSFRYIFGIPPLILVLLPVASS), serve as a signal peptide directing secretion. Intrachain disulfides connect Cys-27/Cys-165, Cys-58/Cys-153, and Cys-71/Cys-116. N-linked (GlcNAc...) asparagine glycans are attached at residues Asn-94, Asn-115, and Asn-140.

It belongs to the IL-7/IL-9 family.

The protein resides in the secreted. Hematopoietic growth factor capable of stimulating the proliferation of lymphoid progenitors. It is important for proliferation during certain stages of B-cell maturation. The protein is Interleukin-7 (IL7) of Sus scrofa (Pig).